We begin with the raw amino-acid sequence, 172 residues long: Large ribosomal subunit protein uL10 (172 aa).

This sequence belongs to the universal ribosomal protein uL10 family. Part of the ribosomal stalk of the 50S ribosomal subunit. The N-terminus interacts with L11 and the large rRNA to form the base of the stalk. The C-terminus forms an elongated spine to which L12 dimers bind in a sequential fashion forming a multimeric L10(L12)X complex.

Forms part of the ribosomal stalk, playing a central role in the interaction of the ribosome with GTP-bound translation factors. The protein is Large ribosomal subunit protein uL10 of Chelativorans sp. (strain BNC1).